The following is a 163-amino-acid chain: MLNHFNFKLKRDVTIIVPGEAFVSNKRVISTILGSCVAVVLCDESSNLIGMNHYVLVKSDLDISPAQRGRYGIYAIPMLINAMLENGANKSNLKAKLFGGTNFMAKGSVKVGLENSEFAINTLNKYRIPILAKDFDQSKSRKIFAFPESFKVIVEYPDGTKVF.

Belongs to the CheD family.

It carries out the reaction L-glutaminyl-[protein] + H2O = L-glutamyl-[protein] + NH4(+). Its function is as follows. Probably deamidates glutamine residues to glutamate on methyl-accepting chemotaxis receptors (MCPs), playing an important role in chemotaxis. This chain is Probable chemoreceptor glutamine deamidase CheD, found in Borreliella afzelii (strain PKo) (Borrelia afzelii).